A 219-amino-acid chain; its full sequence is NAD(P)H-quinone oxidoreductase subunit I (219 aa).

2 consecutive 4Fe-4S ferredoxin-type domains span residues 55-84 and 95-124; these read GRIH…VDWV and RNYS…MTEE. [4Fe-4S] cluster contacts are provided by cysteine 64, cysteine 67, cysteine 70, cysteine 74, cysteine 104, cysteine 107, cysteine 110, and cysteine 114.

The protein belongs to the complex I 23 kDa subunit family. NDH-1 is composed of at least 11 different subunits. Requires [4Fe-4S] cluster as cofactor.

It localises to the cellular thylakoid membrane. The enzyme catalyses a plastoquinone + NADH + (n+1) H(+)(in) = a plastoquinol + NAD(+) + n H(+)(out). The catalysed reaction is a plastoquinone + NADPH + (n+1) H(+)(in) = a plastoquinol + NADP(+) + n H(+)(out). NDH-1 shuttles electrons from an unknown electron donor, via FMN and iron-sulfur (Fe-S) centers, to quinones in the respiratory and/or the photosynthetic chain. The immediate electron acceptor for the enzyme in this species is believed to be plastoquinone. Couples the redox reaction to proton translocation, and thus conserves the redox energy in a proton gradient. The chain is NAD(P)H-quinone oxidoreductase subunit I from Prochlorococcus marinus (strain SARG / CCMP1375 / SS120).